Reading from the N-terminus, the 138-residue chain is Cellular retinoic acid-binding protein 2 (138 aa).

The Nuclear localization signal motif lies at 21-31 (KALGVNMMMRK). Lysine 102 participates in a covalent cross-link: Glycyl lysine isopeptide (Lys-Gly) (interchain with G-Cter in SUMO). Residue 133–135 (RVY) coordinates all-trans-retinoate.

The protein belongs to the calycin superfamily. Fatty-acid binding protein (FABP) family. Interacts with importin alpha. Interacts with RXR and RARA. In terms of processing, sumoylated in response to retinoic acid binding, sumoylation is critical for dissociation from ER and subsequent nuclear translocation. Embryo and skin of adult mouse.

The protein localises to the cytoplasm. It localises to the endoplasmic reticulum. It is found in the nucleus. In terms of biological role, transports retinoic acid to the nucleus. Regulates the access of retinoic acid to the nuclear retinoic acid receptors. The polypeptide is Cellular retinoic acid-binding protein 2 (Crabp2) (Mus musculus (Mouse)).